Consider the following 459-residue polypeptide: Exodeoxyribonuclease 7 large subunit (459 aa).

This sequence belongs to the XseA family. As to quaternary structure, heterooligomer composed of large and small subunits.

It is found in the cytoplasm. It catalyses the reaction Exonucleolytic cleavage in either 5'- to 3'- or 3'- to 5'-direction to yield nucleoside 5'-phosphates.. Its function is as follows. Bidirectionally degrades single-stranded DNA into large acid-insoluble oligonucleotides, which are then degraded further into small acid-soluble oligonucleotides. In Yersinia pestis bv. Antiqua (strain Antiqua), this protein is Exodeoxyribonuclease 7 large subunit.